The chain runs to 466 residues: Glutamate decarboxylase alpha (466 aa).

Residues Thr62 and Asn83 each coordinate substrate. Residues 126–127, Thr212, and His275 each bind pyridoxal 5'-phosphate; that span reads SS. Lys276 is modified (N6-(pyridoxal phosphate)lysine).

It belongs to the group II decarboxylase family. Homohexamer. The cofactor is pyridoxal 5'-phosphate.

It carries out the reaction L-glutamate + H(+) = 4-aminobutanoate + CO2. Its function is as follows. Converts glutamate to gamma-aminobutyrate (GABA), consuming one intracellular proton in the reaction. The gad system helps to maintain a near-neutral intracellular pH when cells are exposed to extremely acidic conditions. The ability to survive transit through the acidic conditions of the stomach is essential for successful colonization of the mammalian host by commensal and pathogenic bacteria. This chain is Glutamate decarboxylase alpha (gadA), found in Shigella flexneri.